A 281-amino-acid chain; its full sequence is Polyamine aminopropyltransferase (281 aa).

A PABS domain is found at 2–236 (DLWLKEGQIS…GYWSFTIGSK (235 aa)). Glutamine 31 serves as a coordination point for S-methyl-5'-thioadenosine. Spermidine-binding residues include histidine 62 and aspartate 86. S-methyl-5'-thioadenosine-binding positions include glutamate 106 and 138 to 139 (DG). Aspartate 156 serves as the catalytic Proton acceptor. Spermidine is bound at residue 156-159 (DSTD).

It belongs to the spermidine/spermine synthase family. In terms of assembly, homodimer or homotetramer.

Its subcellular location is the cytoplasm. The enzyme catalyses S-adenosyl 3-(methylsulfanyl)propylamine + putrescine = S-methyl-5'-thioadenosine + spermidine + H(+). It participates in amine and polyamine biosynthesis; spermidine biosynthesis; spermidine from putrescine: step 1/1. Catalyzes the irreversible transfer of a propylamine group from the amino donor S-adenosylmethioninamine (decarboxy-AdoMet) to putrescine (1,4-diaminobutane) to yield spermidine. This Clostridium tetani (strain Massachusetts / E88) protein is Polyamine aminopropyltransferase.